The chain runs to 404 residues: Argininosuccinate synthase (404 aa).

ATP is bound by residues 10–18 and A37; that span reads AYSGGLDTS. Y90 and S95 together coordinate L-citrulline. G120 contacts ATP. T122, N126, and D127 together coordinate L-aspartate. N126 serves as a coordination point for L-citrulline. L-citrulline is bound by residues R130, S180, S189, E265, and Y277.

Belongs to the argininosuccinate synthase family. Type 1 subfamily. As to quaternary structure, homotetramer.

The protein localises to the cytoplasm. It catalyses the reaction L-citrulline + L-aspartate + ATP = 2-(N(omega)-L-arginino)succinate + AMP + diphosphate + H(+). It participates in amino-acid biosynthesis; L-arginine biosynthesis; L-arginine from L-ornithine and carbamoyl phosphate: step 2/3. The protein is Argininosuccinate synthase of Helicobacter hepaticus (strain ATCC 51449 / 3B1).